The primary structure comprises 25 residues: Chrysophsin-2 (25 aa).

Residue H25 is modified to Histidine amide.

Gill.

It is found in the secreted. Its function is as follows. Has antibacterial activity against Gram-positive bacteria B.subtilis ATCC 6633, L.garvieae ATCC 49156 and S.iniae F-8502, and Gram-negative bacteria E.coli WT-2, V.anguillarum ATCC 19264, V.penaeicida KHA, V.harveyi ATCC 14126, V.vulnificus ATCC 33148 and A.salmonicida NCMB 1102. Has hemolytic activity against human red blood cells. Seems to disrupt the membranes by adopting an alpha helical conformation. May play a significant role in innate host defense. The polypeptide is Chrysophsin-2 (Pagrus major (Red sea bream)).